The following is a 165-amino-acid chain: SPbeta prophage-derived uncharacterized protein YorR (165 aa).

This is SPbeta prophage-derived uncharacterized protein YorR (yorR) from Bacillus subtilis (strain 168).